Consider the following 333-residue polypeptide: T-cell surface glycoprotein CD1b-2 (333 aa).

A signal peptide spans 1–20 (MLLLPLLLLGVILPGGDNED). The Extracellular segment spans residues 21–302 (VFQGPTSFHL…LYWGHPTSIG (282 aa)). Residues N38, N75, and N146 are each glycosylated (N-linked (GlcNAc...) asparagine). 3 disulfides stabilise this stretch: C120–C184, C149–C163, and C224–C279. The Ig-like domain maps to 185 to 295 (PRYLLGVLDA…LGDQDIILYW (111 aa)). Residues 303–323 (LILVAIIVPSLILSICLALWF) traverse the membrane as a helical segment. Topologically, residues 324 to 333 (WRRWSYQNIL) are cytoplasmic. Residues 329 to 332 (YQNI) carry the Internalization signal motif.

Heterodimer with B2M (beta-2-microglobulin). Interacts with saposin C.

The protein localises to the cell membrane. Its subcellular location is the endosome membrane. The protein resides in the lysosome membrane. Functionally, antigen-presenting protein that binds self and non-self lipid and glycolipid antigens and presents them to T-cell receptors on natural killer T-cells. This Ovis aries (Sheep) protein is T-cell surface glycoprotein CD1b-2.